Here is a 144-residue protein sequence, read N- to C-terminus: Bacilliredoxin SH1478 (144 aa).

This sequence belongs to the bacilliredoxin family.

The sequence is that of Bacilliredoxin SH1478 from Staphylococcus haemolyticus (strain JCSC1435).